A 484-amino-acid chain; its full sequence is MACRGGAGNGHRASATLSRVSPGSLYTCRTRTHNICMVSDFFYPNMGGVESHIYQLSQCLIERGHKVIIVTHAYGNRKGIRYLTSGLKVYYLPLKVMYNQSTATTLFHSLPLLRYIFVRERVTIIHSHSSFSAMAHDALFHAKTMGLQTVFTDHSLFGFADVSSVLTNKLLTVSLCDTNHIICVSYTSKENTVLRAALNPEIVSVIPNAVDPTDFTPDPFRRHDSITIVVVSRLVYRKGIDLLSGIIPELCQKYPDLNFIIGGEGPKRIILEEVRERYQLHDRVRLLGALEHKDVRNVLVQGHIFLNTSLTEAFCMAIVEAASCGLQVVSTRVGGIPEVLPENLIILCEPSVKSLCEGLEKAIFQLKSGTLPAPENIHNIVKTFYTWRNVAERTEKVYDRVSVEAVLPMDKRLDRLISHCGPVTGYIFALLAVFNFLFLIFLRWMTPDSIIDVAIDATGPRGAWTNNYSHSKRGGENNEISETR.

At 1–421 the chain is on the cytoplasmic side; sequence MACRGGAGNG…RLDRLISHCG (421 aa). 2 positions are modified to phosphoserine: S21 and S24. The helical transmembrane segment at 422–442 threads the bilayer; the sequence is PVTGYIFALLAVFNFLFLIFL. Residues 443–484 are Lumenal-facing; sequence RWMTPDSIIDVAIDATGPRGAWTNNYSHSKRGGENNEISETR. N-linked (GlcNAc...) asparagine glycosylation is present at N467.

The protein belongs to the glycosyltransferase group 1 family. Glycosyltransferase 4 subfamily. In terms of assembly, component of the glycosylphosphatidylinositol-N-acetylglucosaminyltransferase (GPI-GnT) complex composed at least by PIGA, PIGC, PIGH, PIGP, PIGQ, PIGY and DPM2. Interacts with PIGC, PIGH, PIGP, PIGQ and DPM2. Interacts directly with PIGY; this interaction regulates glycosylphosphatidylinositol-N-acetylglucosaminyltransferase activity. Interacts with PIGQ.

The protein resides in the endoplasmic reticulum membrane. It carries out the reaction a 1,2-diacyl-sn-glycero-3-phospho-(1D-myo-inositol) + UDP-N-acetyl-alpha-D-glucosamine = a 6-(N-acetyl-alpha-D-glucosaminyl)-1-(1,2-diacyl-sn-glycero-3-phospho)-1D-myo-inositol + UDP + H(+). It functions in the pathway glycolipid biosynthesis; glycosylphosphatidylinositol-anchor biosynthesis. In terms of biological role, catalytic subunit of the glycosylphosphatidylinositol-N-acetylglucosaminyltransferase (GPI-GnT) complex that catalyzes the transfer of N-acetylglucosamine from UDP-N-acetylglucosamine to phosphatidylinositol and participates in the first step of GPI biosynthesis. The protein is Phosphatidylinositol N-acetylglucosaminyltransferase subunit A of Homo sapiens (Human).